Consider the following 174-residue polypeptide: NADH-ubiquinone oxidoreductase chain 6 (174 aa).

Helical transmembrane passes span 1–21 (MTYA…GFSS), 24–44 (SPIY…AVIL), 47–67 (GGGY…MVVF), 86–106 (VEVL…VLWV), 111–131 (GVVV…EGEG), and 151–171 (WLVV…IEIA).

This sequence belongs to the complex I subunit 6 family. Core subunit of respiratory chain NADH dehydrogenase (Complex I) which is composed of 45 different subunits.

The protein resides in the mitochondrion inner membrane. The catalysed reaction is a ubiquinone + NADH + 5 H(+)(in) = a ubiquinol + NAD(+) + 4 H(+)(out). Its function is as follows. Core subunit of the mitochondrial membrane respiratory chain NADH dehydrogenase (Complex I) which catalyzes electron transfer from NADH through the respiratory chain, using ubiquinone as an electron acceptor. Essential for the catalytic activity and assembly of complex I. This Pongo abelii (Sumatran orangutan) protein is NADH-ubiquinone oxidoreductase chain 6 (MT-ND6).